Reading from the N-terminus, the 119-residue chain is Small ribosomal subunit protein bS6 (119 aa).

A disordered region spans residues 99 to 119 (KKEKKQSRKEEGSENSEKVEE).

The protein belongs to the bacterial ribosomal protein bS6 family.

Functionally, binds together with bS18 to 16S ribosomal RNA. The sequence is that of Small ribosomal subunit protein bS6 from Thermosipho melanesiensis (strain DSM 12029 / CIP 104789 / BI429).